Here is a 333-residue protein sequence, read N- to C-terminus: UDP-glucose 4-epimerase (333 aa).

NAD(+)-binding positions include tyrosine 11–isoleucine 12, aspartate 32–glycine 37, aspartate 52–leucine 53, phenylalanine 75–serine 79, asparagine 94, threonine 119, tyrosine 143, lysine 147, and phenylalanine 171. Residues threonine 119 and tyrosine 143 each coordinate substrate. Tyrosine 143 acts as the Proton acceptor in catalysis. Substrate is bound by residues asparagine 172, histidine 191–leucine 192, methionine 208–phenylalanine 210, arginine 223, and arginine 284–aspartate 287.

The protein belongs to the NAD(P)-dependent epimerase/dehydratase family. Homodimer. NAD(+) is required as a cofactor.

It catalyses the reaction UDP-alpha-D-glucose = UDP-alpha-D-galactose. The protein operates within carbohydrate metabolism; galactose metabolism. Involved in the metabolism of galactose. Catalyzes the conversion of UDP-galactose (UDP-Gal) to UDP-glucose (UDP-Glc) through a mechanism involving the transient reduction of NAD. The chain is UDP-glucose 4-epimerase (galE) from Streptococcus mutans serotype c (strain ATCC 700610 / UA159).